Reading from the N-terminus, the 3354-residue chain is Cadherin-23 (3354 aa).

Residues 1–23 form the signal peptide; the sequence is MRYSLVTCYAVLWLLMLVPGSWG. The Extracellular portion of the chain corresponds to 24 to 3064; the sequence is QVNRLPFFTN…SVQLPDDMSA (3041 aa). Cadherin domains are found at residues 34–132, 133–236, 237–348, 349–460, 461–561, 562–671, 672–784, 779–890, 891–995, 996–1102, 1103–1208, 1210–1313, 1314–1418, 1420–1527, 1529–1634, 1635–1744, 1745–1851, 1852–1959, 1960–2069, 2070–2174, 2175–2293, 2297–2402, 2403–2509, 2510–2611, 2614–2722, 2729–2846, and 2847–2975; these read HFFD…APTF, HNQP…DPIF, INLP…APEF, NSSE…RPIF, SQPL…VPTF, QKDA…PPTF, SKPA…APYY, KDAP…DPTF, RNLP…TPTF, FPAV…RPIF, LQSS…APVF, QQQY…AVQF, SNAS…SPRF, FTSD…PPVI, SPFG…APVF, QQPH…VPTF, PRDY…DPVL, LNLP…HPLF, TEGT…WPTF, SPPT…RPEF, LNPI…TPQF, GITY…NPIF, DQPS…RPQF, SKPQ…RPVF, PPNG…EPLF, SPQY…PPRF, and TKAE…EEEF. N-linked (GlcNAc...) asparagine glycosylation is found at asparagine 155 and asparagine 206. Asparagine 349, asparagine 393, asparagine 434, asparagine 466, asparagine 472, asparagine 602, asparagine 694, asparagine 765, asparagine 810, asparagine 827, asparagine 941, asparagine 1001, asparagine 1018, asparagine 1171, asparagine 1282, asparagine 1315, asparagine 1473, asparagine 1534, asparagine 1651, asparagine 1667, asparagine 1818, asparagine 1857, asparagine 1889, asparagine 1902, asparagine 2014, asparagine 2050, asparagine 2129, asparagine 2168, asparagine 2195, asparagine 2263, asparagine 2357, and asparagine 2369 each carry an N-linked (GlcNAc...) asparagine glycan. N-linked (GlcNAc...) asparagine glycans are attached at residues asparagine 2578, asparagine 2616, asparagine 2749, asparagine 2808, asparagine 2877, asparagine 2896, asparagine 2941, and asparagine 2981. The helical transmembrane segment at 3065–3085 threads the bilayer; the sequence is LQMAIIVLAILLFLAAMLFVL. Residues 3086–3354 lie on the Cytoplasmic side of the membrane; that stretch reads MNWYYRTIHK…MESPLEITEL (269 aa).

As to quaternary structure, interacts with USH1C and USH1G. antiparallel heterodimer with PCDH15. Isoform C1: Interacts with CAMSAP3; leading to inhibit CAMSAP3 ability to induce microtubule bundle formation. In adult animals relatively high levels of expression are found in testis, skeletal muscle, heart, eye and thymus, and lower expression in kidney, lung and brain. Found in the sensory hair cells of the inner ear.

It is found in the cell membrane. Functionally, cadherins are calcium-dependent cell adhesion proteins. They preferentially interact with themselves in a homophilic manner in connecting cells. CDH23 is required for establishing and/or maintaining the proper organization of the stereocilia bundle of hair cells in the cochlea and the vestibule during late embryonic/early postnatal development. It is part of the functional network formed by USH1C, USH1G, CDH23 and MYO7A that mediates mechanotransduction in cochlear hair cells. Required for normal hearing. The chain is Cadherin-23 (Cdh23) from Mus musculus (Mouse).